Reading from the N-terminus, the 85-residue chain is U4-theraphotoxin-Hhn1j (85 aa).

A signal peptide spans 1-22; it reads MKVTLIAILTCAAVLVLHTTAA. The propeptide occupies 23-48; sequence EELEAESQLMEVGMPDTELAAVDEER. 3 cysteine pairs are disulfide-bonded: Cys-52–Cys-66, Cys-56–Cys-77, and Cys-71–Cys-82.

It belongs to the neurotoxin 12 (Hwtx-2) family. 02 (Hwtx-2) subfamily. Expressed by the venom gland.

Its subcellular location is the secreted. Postsynaptic neurotoxin. In Cyriopagopus hainanus (Chinese bird spider), this protein is U4-theraphotoxin-Hhn1j.